Reading from the N-terminus, the 155-residue chain is Protein-export protein SecB (155 aa).

It belongs to the SecB family. In terms of assembly, homotetramer, a dimer of dimers. One homotetramer interacts with 1 SecA dimer.

The protein localises to the cytoplasm. In terms of biological role, one of the proteins required for the normal export of preproteins out of the cell cytoplasm. It is a molecular chaperone that binds to a subset of precursor proteins, maintaining them in a translocation-competent state. It also specifically binds to its receptor SecA. The sequence is that of Protein-export protein SecB from Escherichia coli O139:H28 (strain E24377A / ETEC).